The following is a 260-amino-acid chain: Dehydrogenase/reductase SDR family member 11 (260 aa).

The first 30 residues, 1–30 (MARPGMERWRDRLALVTGASGGIGAAVARA), serve as a signal peptide directing secretion. NADP(+) contacts are provided by residues 18–23 (GASGGI), 43–44 (RT), E49, 70–71 (DL), and N97. Residues S151 and Y166 each contribute to the substrate site. NADP(+)-binding positions include Y166, K170, 201 to 204 (VETQ), and K208. The active-site Proton acceptor is Y166.

It belongs to the short-chain dehydrogenases/reductases (SDR) family. Homotetramer. Isoform 1: Ubiquitously expressed, with highest levels in testis, small intestine, colon, kidney, brain and heart. Isoform 3: Expressed in brain, heart and skeletal muscle.

It localises to the secreted. It catalyses the reaction a 3beta-hydroxysteroid + NADP(+) = a 3-oxosteroid + NADPH + H(+). It carries out the reaction 17beta-estradiol + NAD(+) = estrone + NADH + H(+). The catalysed reaction is 17beta-estradiol + NADP(+) = estrone + NADPH + H(+). Its pathway is steroid biosynthesis; estrogen biosynthesis. Inhibited by flavonoids including apigenin, luteolin, genistein, kaempferol and quercetin and also by carbenoxolone, zearalenone, glycyrrhetinic, curcumin and flufenamic acid. Functionally, catalyzes the conversion of the 17-keto group of estrone, 4- and 5-androstenes and 5-alpha-androstanes into their 17-beta-hydroxyl metabolites and the conversion of the 3-keto group of 3-, 3,17- and 3,20- diketosteroids into their 3-hydroxyl metabolites. Exhibits reductive 3-beta-hydroxysteroid dehydrogenase activity toward 5-beta-androstanes, 5-beta-pregnanes, 4-pregnenes and bile acids. May also reduce endogenous and exogenous alpha-dicarbonyl compounds and xenobiotic alicyclic ketones. The chain is Dehydrogenase/reductase SDR family member 11 (DHRS11) from Homo sapiens (Human).